We begin with the raw amino-acid sequence, 1031 residues long: Pre-mRNA-splicing factor SYF1 (1031 aa).

HAT repeat units lie at residues 28–60 (HLIP…NVKE), 90–122 (DGLQ…TRQS), 214–248 (KNGS…WAEI), and 250–269 (GGDA…PSLT). Residues 346 to 368 (VEEKVDGEQPQVEGQEQQPQEEP) are disordered. The span at 353–368 (EQPQVEGQEQQPQEEP) shows a compositional bias: low complexity. HAT repeat units lie at residues 452–487 (GEFE…FSET), 610–646 (PDLE…MELR), 664–698 (PKNT…LEES), 700–732 (GTVE…FLEE), 734–768 (KYFE…KFVK), 773–807 (KKLE…LEEE), 845–879 (FGLP…MERK), and 881–915 (GEID…FEIE). Disordered stretches follow at residues 948–969 (AAAS…QDAA) and 1003–1031 (TNAN…EDEF).

Belongs to the crooked-neck family. In terms of assembly, associated with the spliceosome.

It is found in the nucleus. Functionally, involved in pre-mRNA splicing and cell cycle progression. The sequence is that of Pre-mRNA-splicing factor SYF1 (SYF1) from Cryptococcus neoformans var. neoformans serotype D (strain B-3501A) (Filobasidiella neoformans).